Consider the following 212-residue polypeptide: General odorant-binding protein 68 (212 aa).

A signal peptide spans 1–28; that stretch reads MATTIARIGSANWAKLLVLLWLVQLATA. Disulfide bonds link cysteine 64–cysteine 85, cysteine 80–cysteine 152, and cysteine 130–cysteine 162.

Belongs to the PBP/GOBP family.

It localises to the secreted. Present in the aqueous fluid surrounding olfactory sensory dendrites and are thought to aid in the capture and transport of hydrophobic odorants into and through this fluid. This is General odorant-binding protein 68 (Obp68) from Anopheles gambiae (African malaria mosquito).